A 740-amino-acid chain; its full sequence is Zn(2)-C6 fungal-type transcription factor mpsB (740 aa).

The zn(2)-C6 fungal-type DNA-binding region spans 25 to 46 (RLKCDRNQPCSTCSHRGLSFSC). The interval 625–645 (SISTPSHDQDDLDGEAATEAT) is disordered.

The protein localises to the nucleus. Transcription factor; part of the gene cluster that mediates the biosynthesis of macrophasetins, 3-decalinoyltetramic acids (DTAs) which feature a tetramate (pyrrolidine-2,4-dione) unit connected to a decalin fragment and that have potent bioactivities. The polypeptide is Zn(2)-C6 fungal-type transcription factor mpsB (Macrophomina phaseolina (strain MS6) (Charcoal rot fungus)).